A 317-amino-acid polypeptide reads, in one-letter code: Olfactory receptor 2B11 (317 aa).

The Extracellular portion of the chain corresponds to 1–29; it reads MKSDNHSFLGDSPKAFILLGVSDRPWLEL. N-linked (GlcNAc...) asparagine glycosylation occurs at N5. A helical transmembrane segment spans residues 30–53; it reads PLFVVLLLSYVLAMLGNVAIILAS. The Cytoplasmic portion of the chain corresponds to 54 to 61; that stretch reads RVDPQLHS. The chain crosses the membrane as a helical span at residues 62-83; that stretch reads PMYIFLSHLSFLDLCYTTTTVP. Residues 84 to 104 lie on the Extracellular side of the membrane; it reads QMLVNMGSSQKTISYGGCTVQ. A disulfide bridge links C101 with C193. Residues 105-124 traverse the membrane as a helical segment; that stretch reads YAVFHWLGCTECIVLAAMAL. Residues 125-143 lie on the Cytoplasmic side of the membrane; it reads DRYVAICKPLHYAVLMHRA. The helical transmembrane segment at 144–162 threads the bilayer; the sequence is LCQQLVALAWLSGFGNSFV. The Extracellular portion of the chain corresponds to 163 to 199; sequence QVVLTVQLPFCGRQVLNNFFCEVPAVIKLSCADTAVN. Residue N199 is glycosylated (N-linked (GlcNAc...) asparagine). Residues 200 to 223 form a helical membrane-spanning segment; it reads DTILAVLVAFFVLVPLALILLSYG. At 224–240 the chain is on the cytoplasmic side; sequence FIARAVLRIQSSKGRHK. The chain crosses the membrane as a helical span at residues 241–263; that stretch reads AFGTCSSHLMIVSLFYLPAIYMY. Residues 264 to 276 are Extracellular-facing; that stretch reads LQPPSSYSQEQGK. Residues 277 to 296 traverse the membrane as a helical segment; that stretch reads FISLFYSIITPTLNPFTYTL. At 297–317 the chain is on the cytoplasmic side; that stretch reads RNKDMKGALRRLLARIWRLCG.

This sequence belongs to the G-protein coupled receptor 1 family.

Its subcellular location is the cell membrane. Functionally, odorant receptor. The protein is Olfactory receptor 2B11 (OR2B11) of Homo sapiens (Human).